The primary structure comprises 208 residues: Large ribosomal subunit protein uL4 (208 aa).

Residues Arg45–Val89 form a disordered region.

It belongs to the universal ribosomal protein uL4 family. As to quaternary structure, part of the 50S ribosomal subunit.

One of the primary rRNA binding proteins, this protein initially binds near the 5'-end of the 23S rRNA. It is important during the early stages of 50S assembly. It makes multiple contacts with different domains of the 23S rRNA in the assembled 50S subunit and ribosome. In terms of biological role, forms part of the polypeptide exit tunnel. This is Large ribosomal subunit protein uL4 from Lactococcus lactis subsp. lactis (strain IL1403) (Streptococcus lactis).